A 311-amino-acid polypeptide reads, in one-letter code: Methionyl-tRNA formyltransferase (311 aa).

A (6S)-5,6,7,8-tetrahydrofolate-binding site is contributed by 110–113 (SLLP).

The protein belongs to the Fmt family.

It carries out the reaction L-methionyl-tRNA(fMet) + (6R)-10-formyltetrahydrofolate = N-formyl-L-methionyl-tRNA(fMet) + (6S)-5,6,7,8-tetrahydrofolate + H(+). Functionally, attaches a formyl group to the free amino group of methionyl-tRNA(fMet). The formyl group appears to play a dual role in the initiator identity of N-formylmethionyl-tRNA by promoting its recognition by IF2 and preventing the misappropriation of this tRNA by the elongation apparatus. The chain is Methionyl-tRNA formyltransferase from Streptococcus pyogenes serotype M3 (strain ATCC BAA-595 / MGAS315).